Here is a 408-residue protein sequence, read N- to C-terminus: Peptidase T (408 aa).

Positions 1-28 are disordered; the sequence is MKNQLIDRLTRYTTIDTQSDPKSTTTPS. Positions 11-28 are enriched in polar residues; it reads RYTTIDTQSDPKSTTTPS. H78 is a binding site for Zn(2+). D80 is a catalytic residue. D140 is a binding site for Zn(2+). E174 serves as the catalytic Proton acceptor. Positions 175, 197, and 379 each coordinate Zn(2+).

It belongs to the peptidase M20B family. Requires Zn(2+) as cofactor.

The protein resides in the cytoplasm. It carries out the reaction Release of the N-terminal residue from a tripeptide.. Cleaves the N-terminal amino acid of tripeptides. The chain is Peptidase T from Staphylococcus aureus (strain USA300 / TCH1516).